The chain runs to 926 residues: Translation initiation factor IF-2 (926 aa).

Disordered stretches follow at residues methionine 1–glutamate 185 and glutamate 200–glycine 299. 2 stretches are compositionally biased toward low complexity: residues threonine 13 to glycine 24 and alanine 70 to glutamine 96. The segment covering threonine 110–arginine 133 has biased composition (polar residues). Basic and acidic residues predominate over residues methionine 151–glutamate 185. The span at alanine 211 to serine 251 shows a compositional bias: low complexity. Residues serine 424–aspartate 591 form the tr-type G domain. Residues glycine 433–threonine 440 are G1. Glycine 433 to threonine 440 serves as a coordination point for GTP. The tract at residues glycine 458 to histidine 462 is G2. The interval aspartate 479–glycine 482 is G3. GTP contacts are provided by residues aspartate 479 to histidine 483 and asparagine 533 to aspartate 536. The segment at asparagine 533 to aspartate 536 is G4. The G5 stretch occupies residues serine 569–lysine 571.

It belongs to the TRAFAC class translation factor GTPase superfamily. Classic translation factor GTPase family. IF-2 subfamily.

The protein resides in the cytoplasm. One of the essential components for the initiation of protein synthesis. Protects formylmethionyl-tRNA from spontaneous hydrolysis and promotes its binding to the 30S ribosomal subunits. Also involved in the hydrolysis of GTP during the formation of the 70S ribosomal complex. The polypeptide is Translation initiation factor IF-2 (Allorhizobium ampelinum (strain ATCC BAA-846 / DSM 112012 / S4) (Agrobacterium vitis (strain S4))).